Reading from the N-terminus, the 372-residue chain is Flagellar P-ring protein (372 aa).

An N-terminal signal peptide occupies residues 1-26 (MNLSSLPHRLLAAAVALCAIAAPASA).

The protein belongs to the FlgI family. In terms of assembly, the basal body constitutes a major portion of the flagellar organelle and consists of four rings (L,P,S, and M) mounted on a central rod.

The protein localises to the periplasm. Its subcellular location is the bacterial flagellum basal body. Functionally, assembles around the rod to form the L-ring and probably protects the motor/basal body from shearing forces during rotation. The protein is Flagellar P-ring protein of Xanthomonas campestris pv. campestris (strain ATCC 33913 / DSM 3586 / NCPPB 528 / LMG 568 / P 25).